The chain runs to 138 residues: ATP synthase epsilon chain (138 aa).

The protein belongs to the ATPase epsilon chain family. In terms of assembly, F-type ATPases have 2 components, CF(1) - the catalytic core - and CF(0) - the membrane proton channel. CF(1) has five subunits: alpha(3), beta(3), gamma(1), delta(1), epsilon(1). CF(0) has three main subunits: a, b and c.

It localises to the cell membrane. Its function is as follows. Produces ATP from ADP in the presence of a proton gradient across the membrane. This chain is ATP synthase epsilon chain, found in Streptococcus gordonii (strain Challis / ATCC 35105 / BCRC 15272 / CH1 / DL1 / V288).